Consider the following 241-residue polypeptide: Protein McbE (241 aa).

Helical transmembrane passes span 17-35, 54-72, 105-123, 131-149, 163-181, and 212-230; these read TPFSLIWTIMSPTVLFFFL, ISWFVGYISFSVVLFNYCL, LIMSILYVFFFILVVLTGF, IVMIILKSIYINAFMMVSL, STIYSVLITVCMVSGIVSL, and LMTIFFYSIMLIISIISAL.

It localises to the cell membrane. Together with two further proteins McbF and McbG this protein causes immunity to the peptide antibiotic microcin B17 (MccB17), which inhibits DNA replication in enterobacteriaceae. Immunity is determined by two different mechanisms. McbE is involved in the production of extracellular MccB17 and, in a complex with McbF it also serves as 'pump' for the export of active MccB17 from the cytoplasm to the periplasmic space. The sequence is that of Protein McbE (mcbE) from Escherichia coli.